The following is a 238-amino-acid chain: Protein Iojap, chloroplastic (238 aa).

Residues 1-66 constitute a chloroplast transit peptide; the sequence is MASSTGLTVA…KILTSLSNSR (66 aa).

The protein belongs to the Iojap/RsfS family. As to quaternary structure, interacts with chloroplast ribosomal protein uL14c (rpl14).

It localises to the plastid. It is found in the chloroplast. Its function is as follows. May be a ribosome silencing factor (Potential). Involved in plastid biogenesis. In Arabidopsis thaliana (Mouse-ear cress), this protein is Protein Iojap, chloroplastic (IJ).